The sequence spans 157 residues: Pyruvoyl-dependent arginine decarboxylase (157 aa).

The residue at position 44 (S44) is a Pyruvic acid (Ser).

Belongs to the PdaD family. The cofactor is pyruvate.

The catalysed reaction is L-arginine + H(+) = agmatine + CO2. The protein is Pyruvoyl-dependent arginine decarboxylase of Thermococcus kodakarensis (strain ATCC BAA-918 / JCM 12380 / KOD1) (Pyrococcus kodakaraensis (strain KOD1)).